Here is a 74-residue protein sequence, read N- to C-terminus: Large ribosomal subunit protein bL31 (74 aa).

Belongs to the bacterial ribosomal protein bL31 family. Type A subfamily. Part of the 50S ribosomal subunit.

Functionally, binds the 23S rRNA. This Afipia carboxidovorans (strain ATCC 49405 / DSM 1227 / KCTC 32145 / OM5) (Oligotropha carboxidovorans) protein is Large ribosomal subunit protein bL31.